The following is a 345-amino-acid chain: Selenide, water dikinase (345 aa).

Residue Cys-16 is part of the active site. ATP contacts are provided by residues Lys-19 and 45–47; that span reads TSE. Asp-48 serves as a coordination point for Mg(2+). ATP is bound by residues Asp-65, Asp-88, and 136–138; that span reads GHT. Asp-88 is a binding site for Mg(2+). Asp-224 serves as a coordination point for Mg(2+).

Belongs to the selenophosphate synthase 1 family. Class I subfamily. In terms of assembly, homodimer. It depends on Mg(2+) as a cofactor.

The catalysed reaction is hydrogenselenide + ATP + H2O = selenophosphate + AMP + phosphate + 2 H(+). In terms of biological role, synthesizes selenophosphate from selenide and ATP. The protein is Selenide, water dikinase of Aliarcobacter butzleri (strain RM4018) (Arcobacter butzleri).